Consider the following 1783-residue polypeptide: Chitin synthase A (1783 aa).

N-linked (GlcNAc...) asparagine glycosylation is found at N159, N637, N652, N664, and N669. 2 consecutive transmembrane segments (helical) span residues 745-765 (IWVA…LSFV) and 781-801 (LTLV…IVAF). Residues N1014 and N1018 are each glycosylated (N-linked (GlcNAc...) asparagine). Residues 1051–1071 (IMLAMTIILCSVILVKFLAAL) traverse the membrane as a helical segment. N1416 carries N-linked (GlcNAc...) asparagine glycosylation. Transmembrane regions (helical) follow at residues 1441-1461 (FVVF…IYLG), 1474-1494 (FPII…LIFI), and 1502-1522 (IGWM…LPIY). N-linked (GlcNAc...) asparagine glycosylation is found at N1529 and N1617. Positions 1659–1724 (THDINRGQTP…SFDFQRGNMQ (66 aa)) are disordered. Polar residues predominate over residues 1664 to 1688 (RGQTPFQDFPSSRPSVSNLRGQANP). Residue N1695 is glycosylated (N-linked (GlcNAc...) asparagine). In terms of domain architecture, DEK-C spans 1725–1781 (GPDDSMIIEAIQGVLREVDLDTVTKKQVRALVEQRLQTGLVGERRTFMDRQIDNELA).

It belongs to the chitin synthase family. Class V subfamily.

It localises to the cell membrane. It catalyses the reaction [(1-&gt;4)-N-acetyl-beta-D-glucosaminyl](n) + UDP-N-acetyl-alpha-D-glucosamine = [(1-&gt;4)-N-acetyl-beta-D-glucosaminyl](n+1) + UDP + H(+). Functionally, polymerizes chitin, a structural polymer of the cell wall and septum, by transferring the sugar moiety of UDP-GlcNAc to the non-reducing end of the growing chitin polymer. Responsible for about 29% of the chitin in conidial walls, is essential for conidial wall strength in media with high water potential and contributes to strength of hyphal tips. In Colletotrichum graminicola (Maize anthracnose fungus), this protein is Chitin synthase A.